Here is a 212-residue protein sequence, read N- to C-terminus: Probable GTP-binding protein EngB (212 aa).

The 175-residue stretch at 27-201 (GGIEIAFAGR…TRILSDWYQP (175 aa)) folds into the EngB-type G domain. Residues 35–42 (GRSNAGKS), 62–66 (GRTQL), 80–83 (DLPG), 147–150 (TKAD), and 180–182 (FSS) contribute to the GTP site. 2 residues coordinate Mg(2+): S42 and T64.

Belongs to the TRAFAC class TrmE-Era-EngA-EngB-Septin-like GTPase superfamily. EngB GTPase family. Mg(2+) is required as a cofactor.

In terms of biological role, necessary for normal cell division and for the maintenance of normal septation. This is Probable GTP-binding protein EngB from Tolumonas auensis (strain DSM 9187 / NBRC 110442 / TA 4).